A 570-amino-acid chain; its full sequence is Periplasmic trehalase (570 aa).

Positions 1–34 are cleaved as a signal peptide; sequence MIPPEIRRSVLLQKAIKLALAGTLLTFASFSATA. Residues R159, 166–167, N203, 212–214, 284–286, and G317 contribute to the substrate site; these read WD, RSQ, and RPE. Catalysis depends on proton donor/acceptor residues D319 and E503. Residue E518 participates in substrate binding. A disordered region spans residues 544-570; that stretch reads KPCDSVPSTRPASLSATPTKTPSAATQ. The span at 554-570 shows a compositional bias: low complexity; it reads PASLSATPTKTPSAATQ.

It belongs to the glycosyl hydrolase 37 family. Monomer.

The protein resides in the periplasm. It catalyses the reaction alpha,alpha-trehalose + H2O = alpha-D-glucose + beta-D-glucose. In terms of biological role, provides the cells with the ability to utilize trehalose at high osmolarity by splitting it into glucose molecules that can subsequently be taken up by the phosphotransferase-mediated uptake system. This is Periplasmic trehalase from Salmonella paratyphi B (strain ATCC BAA-1250 / SPB7).